The sequence spans 565 residues: Protein priB (565 aa).

Positions Cys20 to Cys50 form a DNA-binding region, zn(2)-C6 fungal-type. Disordered stretches follow at residues Ala82–Ala170 and Asn195–Gly224. The span at Asp90–Tyr111 shows a compositional bias: basic and acidic residues. Residues Ser129–Thr155 are compositionally biased toward low complexity. The segment covering Gly203–Pro215 has biased composition (polar residues).

Its subcellular location is the nucleus. This Lentinula edodes (Shiitake mushroom) protein is Protein priB (priB).